Reading from the N-terminus, the 218-residue chain is Peroxiredoxin-like 2A (218 aa).

The interval 3 to 101 (MWSIGAGAIG…DELGVPLYAV (99 aa)) is thioredoxin fold. Residues cysteine 74 and cysteine 77 each act as redox-active in the active site.

It belongs to the peroxiredoxin-like PRXL2 family. PRXL2A subfamily.

It is found in the cytoplasm. It localises to the secreted. In terms of biological role, involved in redox regulation of the cell. Acts as an antioxidant. Inhibits TNFSF11-induced NFKB1 and JUN activation and osteoclast differentiation. May affect bone resorption and help to maintain bone mass. Acts as a negative regulator of macrophage-mediated inflammation by inhibiting macrophage production of inflammatory cytokines, probably through suppression of the MAPK signaling pathway. This is Peroxiredoxin-like 2A (PRXL2A) from Bos taurus (Bovine).